Reading from the N-terminus, the 338-residue chain is Glyceraldehyde-3-phosphate dehydrogenase (338 aa).

Residues 12-13 (RI), Asp34, and Arg79 contribute to the NAD(+) site. Residues 150–152 (SCT), Thr181, 210–211 (TG), and Arg233 each bind D-glyceraldehyde 3-phosphate. Residue Cys151 is the Nucleophile of the active site. Asn315 is an NAD(+) binding site.

Belongs to the glyceraldehyde-3-phosphate dehydrogenase family. As to quaternary structure, homotetramer.

Its subcellular location is the cytoplasm. It carries out the reaction D-glyceraldehyde 3-phosphate + phosphate + NAD(+) = (2R)-3-phospho-glyceroyl phosphate + NADH + H(+). It participates in carbohydrate degradation; glycolysis; pyruvate from D-glyceraldehyde 3-phosphate: step 1/5. This is Glyceraldehyde-3-phosphate dehydrogenase (gpd-1) from Neurospora crassa (strain ATCC 24698 / 74-OR23-1A / CBS 708.71 / DSM 1257 / FGSC 987).